The following is a 278-amino-acid chain: Large ribosomal subunit protein uL2 (278 aa).

The segment at 223–278 is disordered; the sequence is GSVMNPNDHPHGGGEGKAPIGHPSPMSPWGKKTLGKKTRDHKAKSEKFIVRHRRAK. Over residues 255–264 the composition is skewed to basic residues; sequence TLGKKTRDHK.

Belongs to the universal ribosomal protein uL2 family. In terms of assembly, part of the 50S ribosomal subunit. Forms a bridge to the 30S subunit in the 70S ribosome.

In terms of biological role, one of the primary rRNA binding proteins. Required for association of the 30S and 50S subunits to form the 70S ribosome, for tRNA binding and peptide bond formation. It has been suggested to have peptidyltransferase activity; this is somewhat controversial. Makes several contacts with the 16S rRNA in the 70S ribosome. The chain is Large ribosomal subunit protein uL2 from Lacticaseibacillus paracasei (strain ATCC 334 / BCRC 17002 / CCUG 31169 / CIP 107868 / KCTC 3260 / NRRL B-441) (Lactobacillus paracasei).